The sequence spans 692 residues: Elongation factor G (692 aa).

The 275-residue stretch at Glu8 to Thr282 folds into the tr-type G domain. GTP contacts are provided by residues Ala17 to Thr24, Asp81 to His85, and Asn135 to Asp138. Positions Pro285–Asp304 are disordered. Residues Val290–Asp304 show a composition bias toward basic and acidic residues.

It belongs to the TRAFAC class translation factor GTPase superfamily. Classic translation factor GTPase family. EF-G/EF-2 subfamily.

The protein localises to the cytoplasm. Its function is as follows. Catalyzes the GTP-dependent ribosomal translocation step during translation elongation. During this step, the ribosome changes from the pre-translocational (PRE) to the post-translocational (POST) state as the newly formed A-site-bound peptidyl-tRNA and P-site-bound deacylated tRNA move to the P and E sites, respectively. Catalyzes the coordinated movement of the two tRNA molecules, the mRNA and conformational changes in the ribosome. The chain is Elongation factor G from Desulfitobacterium hafniense (strain DSM 10664 / DCB-2).